The sequence spans 589 residues: Ufm1-specific protease (589 aa).

The tract at residues 1–22 (MTNSQTVSLIGPTQMAPQSTPP) is disordered. Catalysis depends on residues Cys-421, Asp-545, and His-547.

The protein belongs to the peptidase C78 family. As to quaternary structure, interacts with odr-4. In terms of tissue distribution, expressed in head and tail neurons. Expressed in the amphid head neurons ADL, ASI, ASH, ASJ, ASG, ADF, ASK, AWA, AWB, AWC, and in two tail neurons, the phasmid tail neurons PHA and PHB.

The protein localises to the endoplasmic reticulum membrane. Its subcellular location is the cytoplasm. It localises to the perinuclear region. In terms of biological role, thiol protease which recognizes and hydrolyzes the peptide bond at the C-terminal Gly of ufm-1, a ubiquitin-like modifier protein bound to a number of target proteins. Required, with oct-4, for the localization of a subset of 7 transmembrane domain odorant receptors, including odr-10, to the cilia of olfactory neurons AWA and AWC. Operates in aggregation behavior, and responses to oxygen levels. In Caenorhabditis elegans, this protein is Ufm1-specific protease.